Reading from the N-terminus, the 460-residue chain is Transcriptional regulatory protein UME1 (460 aa).

The NEE-box motif lies at 14–22 (NEEFKIWKK). 4 WD repeats span residues 233–271 (PGIKNIQEIKFLNNQIFATCSDDGIIRFWGNEIGKKPLW), 276–316 (SLDG…ALGD), 339–379 (FYSE…AIYN), and 411–451 (GENN…VLDG).

In terms of assembly, component of the RPD3C(L) complex composed of at least ASH1, CTI6, DEP1, PHO23, RPD3, RXT2, RXT3, SAP30, SDS3, SIN3, UME1 and UME6. Component of the RPD3C(S) complex composed of at least EAF3, RCO1, RPD3, SIN3, and UME1. Interacts with RPD3.

The protein localises to the cytoplasm. It localises to the nucleus. Its function is as follows. Catalytic component of the RPD3 histone deacetylase complexes RPD3C(L) and RPD3C(S) responsible for the deacetylation of lysine residues on the N-terminal part of the core histones (H2A, H2B, H3 and H4). Histone deacetylation gives a tag for epigenetic repression and plays an important role in transcriptional regulation, cell cycle progression and developmental events. This chain is Transcriptional regulatory protein UME1 (UME1), found in Saccharomyces cerevisiae (strain ATCC 204508 / S288c) (Baker's yeast).